The sequence spans 410 residues: 2-oxoglutarate-dependent dioxygenase AOP3 (410 aa).

The Fe2OG dioxygenase domain occupies 258–355; the sequence is GNASVGAKEA…RYAAALFSNP (98 aa). Fe cation-binding residues include His-278, Asp-280, and His-335. Residue Arg-346 participates in 2-oxoglutarate binding.

It belongs to the iron/ascorbate-dependent oxidoreductase family. Requires Fe(2+) as cofactor.

2-oxoglutarate-dependent dioxygenase involved in glucosinolates biosynthesis. Catalyzes the conversion of methylsulfinylalkyl glucosinolates to hydroxyalkyl glucosinolates. The chain is 2-oxoglutarate-dependent dioxygenase AOP3 (AOP3) from Arabidopsis thaliana (Mouse-ear cress).